Here is a 132-residue protein sequence, read N- to C-terminus: Gonadotropin subunit beta-1 (132 aa).

The N-terminal stretch at 1–17 is a signal peptide; the sequence is MMRGVTMVLLLPMLVWA. 5 cysteine pairs are disulfide-bonded: C25/C73, C39/C88, C50/C104, C54/C106, and C109/C116. N-linked (GlcNAc...) asparagine glycans are attached at residues N29 and N46.

This sequence belongs to the glycoprotein hormones subunit beta family. Heterodimer of an alpha and a beta chain.

The protein localises to the secreted. In terms of biological role, involved in gametogenesis and steroidogenesis. This is Gonadotropin subunit beta-1 (cgba) from Ictalurus punctatus (Channel catfish).